Here is a 261-residue protein sequence, read N- to C-terminus: Acyl-[acyl-carrier-protein]--UDP-N-acetylglucosamine O-acyltransferase (261 aa).

The protein belongs to the transferase hexapeptide repeat family. LpxA subfamily. As to quaternary structure, homotrimer.

Its subcellular location is the cytoplasm. It catalyses the reaction a (3R)-hydroxyacyl-[ACP] + UDP-N-acetyl-alpha-D-glucosamine = a UDP-3-O-[(3R)-3-hydroxyacyl]-N-acetyl-alpha-D-glucosamine + holo-[ACP]. It participates in glycolipid biosynthesis; lipid IV(A) biosynthesis; lipid IV(A) from (3R)-3-hydroxytetradecanoyl-[acyl-carrier-protein] and UDP-N-acetyl-alpha-D-glucosamine: step 1/6. Involved in the biosynthesis of lipid A, a phosphorylated glycolipid that anchors the lipopolysaccharide to the outer membrane of the cell. In Trichlorobacter lovleyi (strain ATCC BAA-1151 / DSM 17278 / SZ) (Geobacter lovleyi), this protein is Acyl-[acyl-carrier-protein]--UDP-N-acetylglucosamine O-acyltransferase.